The sequence spans 227 residues: Cytochrome c oxidase subunit 2 (227 aa).

Residues 1 to 14 (MAYSFQLGLQDATS) are Mitochondrial intermembrane-facing. The chain crosses the membrane as a helical span at residues 15–45 (PIMEELMNFHDHTLMIVFLISSLVLYIISLM). Topologically, residues 46–59 (LTTKLTHTSTMDAQ) are mitochondrial matrix. A helical membrane pass occupies residues 60–87 (EVETIWTILPAVILIMIALPSLRILYMM). At 88–227 (DEINNPVLTV…HFENWSASMI (140 aa)) the chain is on the mitochondrial intermembrane side. H161, C196, E198, C200, H204, and M207 together coordinate Cu cation. E198 contacts Mg(2+).

Belongs to the cytochrome c oxidase subunit 2 family. Component of the cytochrome c oxidase (complex IV, CIV), a multisubunit enzyme composed of 14 subunits. The complex is composed of a catalytic core of 3 subunits MT-CO1, MT-CO2 and MT-CO3, encoded in the mitochondrial DNA, and 11 supernumerary subunits COX4I, COX5A, COX5B, COX6A, COX6B, COX6C, COX7A, COX7B, COX7C, COX8 and NDUFA4, which are encoded in the nuclear genome. The complex exists as a monomer or a dimer and forms supercomplexes (SCs) in the inner mitochondrial membrane with NADH-ubiquinone oxidoreductase (complex I, CI) and ubiquinol-cytochrome c oxidoreductase (cytochrome b-c1 complex, complex III, CIII), resulting in different assemblies (supercomplex SCI(1)III(2)IV(1) and megacomplex MCI(2)III(2)IV(2)). Found in a complex with TMEM177, COA6, COX18, COX20, SCO1 and SCO2. Interacts with TMEM177 in a COX20-dependent manner. Interacts with COX20. Interacts with COX16. The cofactor is Cu cation.

It localises to the mitochondrion inner membrane. The catalysed reaction is 4 Fe(II)-[cytochrome c] + O2 + 8 H(+)(in) = 4 Fe(III)-[cytochrome c] + 2 H2O + 4 H(+)(out). Functionally, component of the cytochrome c oxidase, the last enzyme in the mitochondrial electron transport chain which drives oxidative phosphorylation. The respiratory chain contains 3 multisubunit complexes succinate dehydrogenase (complex II, CII), ubiquinol-cytochrome c oxidoreductase (cytochrome b-c1 complex, complex III, CIII) and cytochrome c oxidase (complex IV, CIV), that cooperate to transfer electrons derived from NADH and succinate to molecular oxygen, creating an electrochemical gradient over the inner membrane that drives transmembrane transport and the ATP synthase. Cytochrome c oxidase is the component of the respiratory chain that catalyzes the reduction of oxygen to water. Electrons originating from reduced cytochrome c in the intermembrane space (IMS) are transferred via the dinuclear copper A center (CU(A)) of subunit 2 and heme A of subunit 1 to the active site in subunit 1, a binuclear center (BNC) formed by heme A3 and copper B (CU(B)). The BNC reduces molecular oxygen to 2 water molecules using 4 electrons from cytochrome c in the IMS and 4 protons from the mitochondrial matrix. This is Cytochrome c oxidase subunit 2 (MT-CO2) from Praomys jacksoni (African forest rat).